We begin with the raw amino-acid sequence, 291 residues long: Protease HtpX (291 aa).

2 helical membrane passes run isoleucine 4 to phenylalanine 24 and isoleucine 32 to leucine 52. Residue histidine 139 participates in Zn(2+) binding. Glutamate 140 is an active-site residue. A Zn(2+)-binding site is contributed by histidine 143. 2 consecutive transmembrane segments (helical) span residues isoleucine 158–leucine 178 and tryptophan 192–isoleucine 212. Glutamate 221 is a binding site for Zn(2+).

It belongs to the peptidase M48B family. Zn(2+) is required as a cofactor.

The protein localises to the cell membrane. This Buchnera aphidicola subsp. Baizongia pistaciae (strain Bp) protein is Protease HtpX.